The chain runs to 322 residues: MSDLEPAKNPEGASHVSVLLGEVVAALASGPGDMVIDGTFGAGGYTRAILATGASVTAFDRDPSVQRFAAEFSATDGRFRLIQDRFSQITEYLEDASVDGVTLDLGVSSMQLDEAERGFSFMRDGPLDMRMGADGPTAADLVNDLDHTELARILYVYGEEHASRRIASFIIKRREERPFTRTLDLAHVIERALGGRKGAKVHPATRSFQGLRIAVNAELDELEAGLLAAERVLKPGGRLAVVTFHSLEDRIVKNFLAERAGRTPGGSRHLPPVEAGAPPSFQLISSKAIAPGEAELAVNPRARSSKLRAAVRTTAPVWSEAS.

S-adenosyl-L-methionine is bound by residues 43–45 (GGY), Asp60, Phe86, Asp104, and Gln111.

This sequence belongs to the methyltransferase superfamily. RsmH family.

It is found in the cytoplasm. It catalyses the reaction cytidine(1402) in 16S rRNA + S-adenosyl-L-methionine = N(4)-methylcytidine(1402) in 16S rRNA + S-adenosyl-L-homocysteine + H(+). Specifically methylates the N4 position of cytidine in position 1402 (C1402) of 16S rRNA. The polypeptide is Ribosomal RNA small subunit methyltransferase H (Caulobacter sp. (strain K31)).